We begin with the raw amino-acid sequence, 207 residues long: Ribosomal RNA small subunit methyltransferase G (207 aa).

Residues Gly73, Leu78, 124–125 (VE), and Arg139 contribute to the S-adenosyl-L-methionine site.

The protein belongs to the methyltransferase superfamily. RNA methyltransferase RsmG family.

It is found in the cytoplasm. It catalyses the reaction guanosine(527) in 16S rRNA + S-adenosyl-L-methionine = N(7)-methylguanosine(527) in 16S rRNA + S-adenosyl-L-homocysteine. Its function is as follows. Specifically methylates the N7 position of guanine in position 527 of 16S rRNA. This is Ribosomal RNA small subunit methyltransferase G from Escherichia coli O17:K52:H18 (strain UMN026 / ExPEC).